A 228-amino-acid chain; its full sequence is MPGAGDGGKAPARWLGTGLLGLFLLPVTLSLEVSVGKATDIYAVNGTEILLPCTFSSCFGFEDLHFRWTYNSSDAFKILIEGTVKNEKSDPKVTLKDDDRITLVGSTKEKMNNISIVLRDLEFSDTGKYTCHVKNPKENNLQHHATIFLQVVDRLEEVDNTVTLIILAVVGGVIGLLILILLIKKLIIFILKKTREKKKECLVSSSGNDNTENGLPGSKAEEKPPSKV.

The first 30 residues, 1–30, serve as a signal peptide directing secretion; sequence MPGAGDGGKAPARWLGTGLLGLFLLPVTLS. In terms of domain architecture, Ig-like C2-type spans 31 to 148; that stretch reads LEVSVGKATD…NNLQHHATIF (118 aa). Residues 31–162 are Extracellular-facing; that stretch reads LEVSVGKATD…DRLEEVDNTV (132 aa). N-linked (GlcNAc...) asparagine glycans are attached at residues N45, N71, and N113. An intrachain disulfide couples C53 to C131. Residues 163–183 form a helical membrane-spanning segment; the sequence is TLIILAVVGGVIGLLILILLI. Over 184-228 the chain is Cytoplasmic; the sequence is KKLIIFILKKTREKKKECLVSSSGNDNTENGLPGSKAEEKPPSKV. A disordered region spans residues 200-228; that stretch reads ECLVSSSGNDNTENGLPGSKAEEKPPSKV. Residues 203–213 are compositionally biased toward polar residues; the sequence is VSSSGNDNTEN. Residues 219–228 are compositionally biased toward basic and acidic residues; sequence KAEEKPPSKV.

Belongs to the sodium channel auxiliary subunit SCN4B (TC 8.A.17) family. In terms of assembly, a voltage-gated sodium (Nav) channel consists of an ion-conducting pore-forming alpha subunit functional on its own that is regulated by one or more beta subunits. The beta subunit SCN4B is disulfide-linked to the pore-forming alpha subunit. Interacts with SCN1A; regulatory subunit of SCN1A/Nav1.1. Interacts with SCN2A; regulatory subunit of SCN2A/Nav1.2. Post-translationally, contains an interchain disulfide bond with SCN2A. N-glycosylated. In terms of tissue distribution, expressed at a high level in dorsal root ganglia, at a lower level in brain, spinal cord, skeletal muscle and heart. Expressed in the atrium.

It is found in the cell membrane. Functionally, regulatory subunit of multiple voltage-gated sodium (Nav) channels directly mediating the depolarization of excitable membranes. Navs, also called VGSCs (voltage-gated sodium channels) or VDSCs (voltage-dependent sodium channels), operate by switching between closed and open conformations depending on the voltage difference across the membrane. In the open conformation they allow Na(+) ions to selectively pass through the pore, along their electrochemical gradient. The influx of Na+ ions provokes membrane depolarization, initiating the propagation of electrical signals throughout cells and tissues. The accessory beta subunits participate in localization and functional modulation of the Nav channels. Modulates the activity of SCN1A/Nav1.1. Modulates the activity of SCN2A/Nav1.2. The sequence is that of Sodium channel regulatory subunit beta-4 from Homo sapiens (Human).